Reading from the N-terminus, the 359-residue chain is MVTGIVFHEEYLKHEQSPTHPERRERLAYTMDQLREEGIFESERIVLLEPFKASLEDVLEVHTEEYVRFLEMESKKGGIIDFDTNIPVGVFDRALLAAGGAIRAAQAVLNKECENAFAMIRPPGHHAKPYIGAGFCYLNNMAIMVKWLLKQGFERIAILDWDAHHGDGTQEIFYNDDRVLFISTHQMPLYPGTGYPEECGTGKGEGYTVNIPLPPGTGDEGYMMVIDEIIEPVVNEFKPQFIAISAGQDNHFTDPITSLALTARGYAEMMRRAVAMAEKHCDGRLVAVLEGGYSVEGALPYTNLGIIAAMAGFDLSAIREPENYLPELLWRKRDSALVKLKHNIEDVKRVHSKYWKCFK.

His126 acts as the Proton donor/acceptor in catalysis. 3 residues coordinate Zn(2+): Asp162, His164, and Asp249.

The protein belongs to the histone deacetylase family. Requires Zn(2+) as cofactor.

Its function is as follows. Probable deacetylase. The sequence is that of Probable deacetylase AF_0130 from Archaeoglobus fulgidus (strain ATCC 49558 / DSM 4304 / JCM 9628 / NBRC 100126 / VC-16).